Consider the following 80-residue polypeptide: Myocilin opposite strand protein (80 aa).

Positions 53-80 are disordered; the sequence is EQAPPPHRTYLTVPPAPPPSPAEDPTVS.

In Homo sapiens (Human), this protein is Myocilin opposite strand protein.